Consider the following 588-residue polypeptide: Urease subunit alpha (588 aa).

The Urease domain occupies 149-588; the sequence is GGIDTHIHFI…LPMAQRYFLF (440 aa). Positions 154, 156, and 237 each coordinate Ni(2+). Lysine 237 is modified (N6-carboxylysine). Histidine 239 is a substrate binding site. Ni(2+) contacts are provided by histidine 266 and histidine 292. The active-site Proton donor is the histidine 340. Position 380 (aspartate 380) interacts with Ni(2+).

The protein belongs to the metallo-dependent hydrolases superfamily. Urease alpha subunit family. As to quaternary structure, heterotrimer of UreA (gamma), UreB (beta) and UreC (alpha) subunits. Three heterotrimers associate to form the active enzyme. Ni cation serves as cofactor. In terms of processing, carboxylation allows a single lysine to coordinate two nickel ions.

It is found in the cytoplasm. It carries out the reaction urea + 2 H2O + H(+) = hydrogencarbonate + 2 NH4(+). Its pathway is nitrogen metabolism; urea degradation; CO(2) and NH(3) from urea (urease route): step 1/1. This Opitutus terrae (strain DSM 11246 / JCM 15787 / PB90-1) protein is Urease subunit alpha.